The primary structure comprises 67 residues: Conotoxin LiC33 (67 aa).

The N-terminal stretch at 1–22 is a signal peptide; it reads MRCVPVFIILLLLSPSAPSVDA. A propeptide spanning residues 23–48 is cleaved from the precursor; it reads HPKTKDDVPLASFHDDAKRTLQRLWI. F63 carries the phenylalanine amide modification. The propeptide occupies 65-67; sequence KGK.

It belongs to the conotoxin T superfamily. In terms of processing, contains 2 disulfide bonds that can be either 'C1-C3, C2-C4' or 'C1-C4, C2-C3', since these disulfide connectivities have been observed for conotoxins with cysteine framework V (for examples, see AC P0DQQ7 and AC P81755). As to expression, expressed by the venom duct.

It is found in the secreted. In Conus lividus (Livid cone), this protein is Conotoxin LiC33.